A 242-amino-acid polypeptide reads, in one-letter code: Glutamine transport ATP-binding protein GlnQ (242 aa).

An ABC transporter domain is found at 2–236 (IYFHQVNKYY…PKEERAKVFL (235 aa)). 34-41 (GPSGSGKS) is an ATP binding site.

The protein belongs to the ABC transporter superfamily.

It is found in the cell membrane. In terms of biological role, part of the binding-protein-dependent transport system for glutamine. Probably responsible for energy coupling to the transport system. The polypeptide is Glutamine transport ATP-binding protein GlnQ (glnQ) (Geobacillus stearothermophilus (Bacillus stearothermophilus)).